The following is a 620-amino-acid chain: Delta(14)-sterol reductase LBR (620 aa).

The 62-residue stretch at 1-62 (MPGRKFADGE…DIKPLKSFKQ (62 aa)) folds into the Tudor domain. Residues 1 to 215 (MPGRKFADGE…TPQRRDLEFG (215 aa)) lie on the Nuclear side of the membrane. Positions 52 to 111 (SDIKPLKSFKQRKSGSTSSSPSRRRSSRSRSRSRSRSPGRAPKGSRRSVSASYQADAKEK) are disordered. At Lys-55 the chain carries N6-acetyllysine. Residues Ser-59 and Ser-67 each carry the phosphoserine modification. Residues Ser-71 and Ser-86 each carry the phosphoserine; by CDK1 modification. Basic residues predominate over residues 73 to 88 (SRRRSSRSRSRSRSRS). Position 88 is a phosphoserine (Ser-88). Ser-96 is a glycosylation site (O-linked (GlcNAc) serine). Phosphoserine occurs at positions 99 and 101. Phosphothreonine is present on Thr-123. Phosphoserine is present on Ser-133. Thr-205 is modified (phosphothreonine). 8 helical membrane-spanning segments follow: residues 216–236 (GVPG…LLLL), 263–283 (VCGV…LPVG), 304–324 (LYAF…DIEL), 331–351 (FLQF…YLYA), 452–472 (IIHD…VPFT), 486–506 (DLSW…YVIF), 525–547 (LAHL…WWGF), and 566–586 (PCGF…ALLI). Lys-599 and Lys-606 each carry N6-acetyllysine.

This sequence belongs to the ERG4/ERG24 family. As to quaternary structure, interacts with CBX5. Interacts with DNA. Interaction with DNA is sequence independent with higher affinity for supercoiled and relaxed circular DNA than linear DNA. Interacts with lamin B. Interacts with CLNK. Interacts with TMEM147; promoting LBR localization to the nucleus inner membrane. In terms of processing, phosphorylated by CDK1 in mitosis when the inner nuclear membrane breaks down into vesicles that dissociate from the lamina and the chromatin. It is phosphorylated by different protein kinases in interphase when the membrane is associated with these structures. Phosphorylation of LBR and HP1 proteins may be responsible for some of the alterations in chromatin organization and nuclear structure which occur at various times during the cell cycle. Phosphorylated by SRPK1. In late anaphase LBR is dephosphorylated, probably by PP1 and/or PP2A, allowing reassociation with chromatin.

Its subcellular location is the nucleus inner membrane. It is found in the nucleus. The protein localises to the cytoplasm. The protein resides in the endoplasmic reticulum membrane. It catalyses the reaction 5alpha-cholest-8,14-dien-3beta-ol + NADPH + H(+) = 5alpha-cholest-8-en-3beta-ol + NADP(+). The enzyme catalyses 4,4-dimethyl-5alpha-cholesta-8,24-dien-3beta-ol + NADP(+) = 4,4-dimethyl-5alpha-cholesta-8,14,24-trien-3beta-ol + NADPH + H(+). The catalysed reaction is 4,4-dimethyl-8,14-cholestadien-3beta-ol + NADPH + H(+) = 4,4-dimethyl-5alpha-cholest-8-en-3beta-ol + NADP(+). Its pathway is steroid biosynthesis; cholesterol biosynthesis. Its function is as follows. Catalyzes the reduction of the C14-unsaturated bond of lanosterol, as part of the metabolic pathway leading to cholesterol biosynthesis. Plays a critical role in myeloid cell cholesterol biosynthesis which is essential to both myeloid cell growth and functional maturation. Mediates the activation of NADPH oxidases, perhaps by maintaining critical levels of cholesterol required for membrane lipid raft formation during neutrophil differentiation. Anchors the lamina and the heterochromatin to the inner nuclear membrane. In Rattus norvegicus (Rat), this protein is Delta(14)-sterol reductase LBR (Lbr).